Consider the following 334-residue polypeptide: Fructose-1,6-bisphosphatase class 1 (334 aa).

Mg(2+)-binding residues include E87, D106, L108, and D109. Substrate is bound by residues 109–112 (DGSS), N208, and K274. Residue E280 coordinates Mg(2+).

It belongs to the FBPase class 1 family. In terms of assembly, homotetramer. Requires Mg(2+) as cofactor.

The protein resides in the cytoplasm. It carries out the reaction beta-D-fructose 1,6-bisphosphate + H2O = beta-D-fructose 6-phosphate + phosphate. Its pathway is carbohydrate biosynthesis; gluconeogenesis. The polypeptide is Fructose-1,6-bisphosphatase class 1 (Psychrobacter sp. (strain PRwf-1)).